Consider the following 382-residue polypeptide: Na(+)/H(+) antiporter NhaA (382 aa).

Transmembrane regions (helical) follow at residues 5-25 (INLL…ALAW), 42-62 (FGGV…FFGI), 88-108 (LATL…NAVI), 116-136 (GWGI…RLVF), 145-165 (FLLL…AVFY), 169-189 (VHPT…AAYI), 261-281 (IVVD…RFSS), 282-302 (VGTA…AGIL), 327-347 (TGLV…VAFV), and 353-373 (GAAK…VALG).

This sequence belongs to the NhaA Na(+)/H(+) (TC 2.A.33) antiporter family.

It localises to the cell inner membrane. It carries out the reaction Na(+)(in) + 2 H(+)(out) = Na(+)(out) + 2 H(+)(in). Na(+)/H(+) antiporter that extrudes sodium in exchange for external protons. This chain is Na(+)/H(+) antiporter NhaA, found in Geobacter metallireducens (strain ATCC 53774 / DSM 7210 / GS-15).